Consider the following 127-residue polypeptide: Histone H2A (127 aa).

The span at 1–20 (MSGRGKGGKAKTGGKAKSRS) shows a compositional bias: basic residues. Residues 1–23 (MSGRGKGGKAKTGGKAKSRSSRA) form a disordered region. N-acetylserine is present on Ser2. Ser2 is subject to Phosphoserine. Lys6, Lys9, and Lys11 each carry N6-acetyllysine; partial. Gln106 bears the N5-methylglutamine mark. A Glycyl lysine isopeptide (Lys-Gly) (interchain with G-Cter in ubiquitin) cross-link involves residue Lys121.

This sequence belongs to the histone H2A family. As to quaternary structure, the nucleosome is a histone octamer containing two molecules each of H2A, H2B, H3 and H4 assembled in one H3-H4 heterotetramer and two H2A-H2B heterodimers. The octamer wraps approximately 147 bp of DNA. Monoubiquitination of Lys-121 gives a specific tag for epigenetic transcriptional repression. Post-translationally, phosphorylation on Ser-2 is enhanced during mitosis. Phosphorylation on Ser-2 directly represses transcription.

It is found in the nucleus. Its subcellular location is the chromosome. In terms of biological role, core component of nucleosome. Nucleosomes wrap and compact DNA into chromatin, limiting DNA accessibility to the cellular machineries which require DNA as a template. Histones thereby play a central role in transcription regulation, DNA repair, DNA replication and chromosomal stability. DNA accessibility is regulated via a complex set of post-translational modifications of histones, also called histone code, and nucleosome remodeling. The chain is Histone H2A (his-3) from Caenorhabditis elegans.